Here is a 510-residue protein sequence, read N- to C-terminus: Guanosine import ATP-binding protein NupO (510 aa).

ABC transporter domains are found at residues 5-240 and 257-501; these read IEML…VGRE and LAID…AGST. Residue 37 to 44 participates in ATP binding; the sequence is GENGAGKS.

This sequence belongs to the ABC transporter superfamily. The complex is composed of two ATP-binding proteins (NupO), two transmembrane proteins (NupP and NupQ) and a solute-binding protein (NupN).

It localises to the cell membrane. Its function is as follows. Part of an ABC transporter complex involved in the uptake of guanosine. Responsible for energy coupling to the transport system. May be a nucleoside transporter of broad specificity but with various affinities for different substrates. In Bacillus subtilis (strain 168), this protein is Guanosine import ATP-binding protein NupO.